Consider the following 922-residue polypeptide: NEDD4-like E3 ubiquitin-protein ligase WWP1 (922 aa).

In terms of domain architecture, C2 spans 1-116 (MATASPRSDT…IHNRKLERVK (116 aa)). Composition is skewed to polar residues over residues 210 to 219 (GDNTPSSPSQ), 243 to 278 (NGES…STTV), 286 to 302 (ILTS…TSAE), 314 to 323 (DTSNSRSSSA), and 340 to 351 (RQQSGNANTETL). A disordered region spans residues 210 to 388 (GDNTPSSPSQ…RPQPLPPGWE (179 aa)). 4 consecutive WW domains span residues 349–382 (ETLP…RPQP), 381–414 (QPLP…RPTM), 456–489 (GPLP…DPRT), and 496–529 (EPLP…DPRN). The required for interaction with and ubiquitination of AMOTL2. Required for interaction with YAP1 stretch occupies residues 349–531 (ETLPSGWEQR…TTFKDPRNGK (183 aa)). Residues 588 to 922 (KPYDLRRRLY…IEETEGFGQE (335 aa)) form the HECT domain. C890 acts as the Glycyl thioester intermediate in catalysis.

Interacts with the Crumbs complex components PALS1 and PATJ; interaction with the Crumbs complex is enhanced by WWP1's interaction with AMOTL2 and facilitates WWP1 localization to the plasma membrane. Interaction with the Crumbs complex promotes WWP1 monoubiquitination of AMOTL2, which activates the Hippo signaling pathway. Binds KLF2 and HIVEP3. Binds SCNN1A, SCNN1B, SCNN1G, WBP1, WBP2, DRPLA and adenovirus type 2 PIII. Interacts with RNF11. Interacts with SPART. Interacts with ERBB4 isoforms JM-B CYT-1 and JM-A CYT-1. Interacts with SMAD1, SMAD2, SMAD3, SMAD5, SMAD6, SMAD7, TGFBR1 and TGFBR2. Associates with the TGFBR1:TGFBR2 receptor complex in presence of SMAD7. Interacts with SKIL isoform 1. Interacts with TP63 isoform 1 and isoform 2. Interacts with STAMBP and RNF11. Interacts with NDFIP1 and NDFIP2; this interaction activates the E3 ubiquitin-protein ligase. Interacts with TGIF. Interacts (via WW domains) with ARRDC1, ARRDC2 and ARRDC3. In terms of assembly, (Microbial infection) Interacts with HTLV-1 protein Gag. As to quaternary structure, (Microbial infection) Interacts with ebola virus protein VP40. Post-translationally, auto-ubiquitinated and ubiquitinated by RNF11. As to expression, detected in heart, placenta, pancreas, kidney, liver, skeletal muscle, bone marrow, fetal brain, and at much lower levels in adult brain and lung. Isoform 1 and isoform 5 predominate in all tissues tested, except in testis and bone marrow, where isoform 5 is expressed at much higher levels than isoform 1.

The protein resides in the cytoplasm. It localises to the cell membrane. Its subcellular location is the nucleus. It is found in the cell junction. It catalyses the reaction S-ubiquitinyl-[E2 ubiquitin-conjugating enzyme]-L-cysteine + [acceptor protein]-L-lysine = [E2 ubiquitin-conjugating enzyme]-L-cysteine + N(6)-ubiquitinyl-[acceptor protein]-L-lysine.. It participates in protein modification; protein ubiquitination. With respect to regulation, activated by NDFIP1- and NDFIP2-binding. E3 ubiquitin-protein ligase which accepts ubiquitin from an E2 ubiquitin-conjugating enzyme in the form of a thioester and then directly transfers the ubiquitin to targeted substrates. Ubiquitinates ERBB4 isoforms JM-A CYT-1 and JM-B CYT-1, KLF2, KLF5 and TP63 and promotes their proteasomal degradation. Ubiquitinates RNF11 without targeting it for degradation. Ubiquitinates and promotes degradation of TGFBR1; the ubiquitination is enhanced by SMAD7. Ubiquitinates SMAD6 and SMAD7. Ubiquitinates and promotes degradation of SMAD2 in response to TGF-beta signaling, which requires interaction with TGIF. Activates the Hippo signaling pathway in response to cell contact inhibition and recruitment to the Crumbs complex at the cell membrane. Monoubiquitinates AMOTL2 which facilitates its interaction with and activation of LATS2. LATS2 then phosphorylates YAP1, excluding it from the nucleus and therefore ultimately represses YAP1-driven transcription of target genes. The sequence is that of NEDD4-like E3 ubiquitin-protein ligase WWP1 (WWP1) from Homo sapiens (Human).